We begin with the raw amino-acid sequence, 309 residues long: 11-beta-hydroxysteroid dehydrogenase-like 3 (309 aa).

A helical; Signal-anchor for type II membrane protein membrane pass occupies residues 10 to 30; sequence LLLPPLTIIFLFLFYPFYLLI. NADP(+)-binding positions include 54-80 and aspartate 105; that span reads GASS…VARR. Serine 184 is a binding site for substrate. Catalysis depends on tyrosine 197, which acts as the Proton acceptor. Residues 197-201 and lysine 201 each bind NADP(+); that span reads YAASK.

The protein belongs to the short-chain dehydrogenases/reductases (SDR) family.

It localises to the membrane. This is 11-beta-hydroxysteroid dehydrogenase-like 3 (HSD3) from Arabidopsis thaliana (Mouse-ear cress).